The following is a 331-amino-acid chain: DNA-directed RNA polymerase subunit alpha (331 aa).

Residues Met-1–Asn-226 form an alpha N-terminal domain (alpha-NTD) region. Residues Leu-243–Asn-331 are alpha C-terminal domain (alpha-CTD).

This sequence belongs to the RNA polymerase alpha chain family. As to quaternary structure, homodimer. The RNAP catalytic core consists of 2 alpha, 1 beta, 1 beta' and 1 omega subunit. When a sigma factor is associated with the core the holoenzyme is formed, which can initiate transcription.

It catalyses the reaction RNA(n) + a ribonucleoside 5'-triphosphate = RNA(n+1) + diphosphate. Functionally, DNA-dependent RNA polymerase catalyzes the transcription of DNA into RNA using the four ribonucleoside triphosphates as substrates. This is DNA-directed RNA polymerase subunit alpha from Clavibacter sepedonicus (Clavibacter michiganensis subsp. sepedonicus).